The chain runs to 89 residues: Small ribosomal subunit protein uS15 (89 aa).

Basic and acidic residues predominate over residues 1 to 11 (MSITAERKAEV). A disordered region spans residues 1–24 (MSITAERKAEVIKTNAKKAGDTGS).

It belongs to the universal ribosomal protein uS15 family. Part of the 30S ribosomal subunit. Forms a bridge to the 50S subunit in the 70S ribosome, contacting the 23S rRNA.

One of the primary rRNA binding proteins, it binds directly to 16S rRNA where it helps nucleate assembly of the platform of the 30S subunit by binding and bridging several RNA helices of the 16S rRNA. In terms of biological role, forms an intersubunit bridge (bridge B4) with the 23S rRNA of the 50S subunit in the ribosome. The polypeptide is Small ribosomal subunit protein uS15 (Afipia carboxidovorans (strain ATCC 49405 / DSM 1227 / KCTC 32145 / OM5) (Oligotropha carboxidovorans)).